Reading from the N-terminus, the 782-residue chain is Endonuclease MutS2 (782 aa).

336-343 contacts ATP; that stretch reads GPNTGGKT. The Smr domain maps to 707–782; sequence LDLRGYRYED…GFGVTVATLK (76 aa).

Belongs to the DNA mismatch repair MutS family. MutS2 subfamily. Homodimer. Binds to stalled ribosomes, contacting rRNA.

Functionally, endonuclease that is involved in the suppression of homologous recombination and thus may have a key role in the control of bacterial genetic diversity. Acts as a ribosome collision sensor, splitting the ribosome into its 2 subunits. Detects stalled/collided 70S ribosomes which it binds and splits by an ATP-hydrolysis driven conformational change. Acts upstream of the ribosome quality control system (RQC), a ribosome-associated complex that mediates the extraction of incompletely synthesized nascent chains from stalled ribosomes and their subsequent degradation. Probably generates substrates for RQC. This is Endonuclease MutS2 from Staphylococcus aureus (strain MRSA252).